An 860-amino-acid chain; its full sequence is Leucine--tRNA ligase (860 aa).

Residues 42-52 (PYPSGRLHMGH) carry the 'HIGH' region motif. Positions 619 to 623 (KMSKS) match the 'KMSKS' region motif. Lys622 lines the ATP pocket.

The protein belongs to the class-I aminoacyl-tRNA synthetase family.

Its subcellular location is the cytoplasm. It catalyses the reaction tRNA(Leu) + L-leucine + ATP = L-leucyl-tRNA(Leu) + AMP + diphosphate. The polypeptide is Leucine--tRNA ligase (Photorhabdus laumondii subsp. laumondii (strain DSM 15139 / CIP 105565 / TT01) (Photorhabdus luminescens subsp. laumondii)).